A 160-amino-acid chain; its full sequence is Small ribosomal subunit protein uS9 (160 aa).

This sequence belongs to the universal ribosomal protein uS9 family.

The polypeptide is Small ribosomal subunit protein uS9 (Bradyrhizobium sp. (strain ORS 278)).